A 70-amino-acid polypeptide reads, in one-letter code: Turripeptide Ici9.2 (70 aa).

Residues 1–20 form the signal peptide; the sequence is MKVYCLLLVLLVGLVSQAQG. One can recognise a Kazal-like domain in the interval 21-70; it reads QLDKKCQTMCTMEYLPVCGSDGTTYPNKCTLTSTACVNQMDITVLHNGEC. 3 disulfide bridges follow: C26-C56, C30-C49, and C38-C70.

It belongs to the conopeptide P-like superfamily. In terms of tissue distribution, expressed by the venom duct.

It localises to the secreted. Its function is as follows. Acts as a neurotoxin by inhibiting an ion channel. May also act as a serine protease inhibitor, since it possess the kazal serine protease inhibitor signature. This Iotyrris cingulifera (Sea snail) protein is Turripeptide Ici9.2.